Here is a 266-residue protein sequence, read N- to C-terminus: MPDVTLTTLQGLKQSGEKIAMLTCYDATFAHTASQAGVDVLLVGDSLGMVLQGHDSTLPVSNEEMAYHTACVKRGNKGSLIVTDLAFESSHSVAQTLADAVRLMQAGAHMVKLEGGAWLAEPIARLAQMGVPVCAHLGLTPQAVNLFGGFKVQGRQETQARQLRADAIALEQAGAAMLLLECVPSVLAEEITQAVKIPVIGIGAGAATDGQVLVMHDMLGLSLTGRSPKFVKDFMQGQESIPAAIAAYVRAVKDVSFPAAEHGFNA.

Residues Asp45 and Asp84 each contribute to the Mg(2+) site. 3-methyl-2-oxobutanoate is bound by residues 45 to 46 (DS), Asp84, and Lys112. Residue Glu114 coordinates Mg(2+). Glu181 serves as the catalytic Proton acceptor.

The protein belongs to the PanB family. As to quaternary structure, homodecamer; pentamer of dimers. Mg(2+) serves as cofactor.

It is found in the cytoplasm. The catalysed reaction is 3-methyl-2-oxobutanoate + (6R)-5,10-methylene-5,6,7,8-tetrahydrofolate + H2O = 2-dehydropantoate + (6S)-5,6,7,8-tetrahydrofolate. The protein operates within cofactor biosynthesis; (R)-pantothenate biosynthesis; (R)-pantoate from 3-methyl-2-oxobutanoate: step 1/2. Its function is as follows. Catalyzes the reversible reaction in which hydroxymethyl group from 5,10-methylenetetrahydrofolate is transferred onto alpha-ketoisovalerate to form ketopantoate. In Pseudomonas aeruginosa (strain UCBPP-PA14), this protein is 3-methyl-2-oxobutanoate hydroxymethyltransferase 2.